A 490-amino-acid chain; its full sequence is Betaine aldehyde dehydrogenase (490 aa).

K(+) is bound by residues I27 and D93. 150–152 is an NAD(+) binding site; that stretch reads GAW. The active-site Charge relay system is K162. Residue 176-179 participates in NAD(+) binding; the sequence is KPSE. V180 serves as a coordination point for K(+). Position 230-233 (230-233) interacts with NAD(+); it reads GTDT. A K(+)-binding site is contributed by L246. The Proton acceptor role is filled by E252. Residues G254, C286, and E387 each contribute to the NAD(+) site. C286 serves as the catalytic Nucleophile. The residue at position 286 (C286) is a Cysteine sulfenic acid (-SOH). Positions 457 and 460 each coordinate K(+). E464 serves as the catalytic Charge relay system.

This sequence belongs to the aldehyde dehydrogenase family. As to quaternary structure, dimer of dimers. The cofactor is K(+).

The catalysed reaction is betaine aldehyde + NAD(+) + H2O = glycine betaine + NADH + 2 H(+). The protein operates within amine and polyamine biosynthesis; betaine biosynthesis via choline pathway; betaine from betaine aldehyde: step 1/1. Its function is as follows. Involved in the biosynthesis of the osmoprotectant glycine betaine. Catalyzes the irreversible oxidation of betaine aldehyde to the corresponding acid. This is Betaine aldehyde dehydrogenase from Pseudomonas fluorescens (strain SBW25).